The primary structure comprises 266 residues: 15-hydroxyprostaglandin dehydrogenase [NAD(+)] (266 aa).

Residues 12-20, 36-37, 63-65, and N91 each bind NAD(+); these read GAAQGIGRA, DW, and CDV. Residues S138 and Q148 each coordinate substrate. Y151 acts as the Proton acceptor in catalysis. Residues 151–155 and 186–188 each bind NAD(+); these read YCASK and VNT.

This sequence belongs to the short-chain dehydrogenases/reductases (SDR) family. In terms of assembly, homodimer.

Its subcellular location is the cytoplasm. The enzyme catalyses prostaglandin E2 + NAD(+) = 15-oxoprostaglandin E2 + NADH + H(+). It catalyses the reaction (15S)-hydroxy-(5Z,8Z,11Z,13E)-eicosatetraenoate + NAD(+) = 15-oxo-(5Z,8Z,11Z,13E)-eicosatetraenoate + NADH + H(+). The catalysed reaction is (11R)-hydroxy-(5Z,8Z,12E,14Z)-eicosatetraenoate + NAD(+) = 11-oxo-(5Z,8Z,12E,14Z)-eicosatetraenoate + NADH + H(+). It carries out the reaction lipoxin A4 + NAD(+) = 15-oxo-(5S,6R)-dihydroxy-(7E,9E,11Z,13E)-eicosatetraenoate + NADH + H(+). The enzyme catalyses 15-oxo-(5S,6R)-dihydroxy-(7E,9E,11Z)-eicosatrienoate + NADH + H(+) = (5S,6R,15S)-trihydroxy-(7E,9E,11Z)-eicosatrienoate + NAD(+). It catalyses the reaction prostaglandin A1 + NAD(+) = 15-oxo-prostaglandin A1 + NADH + H(+). The catalysed reaction is prostaglandin E1 + NAD(+) = 15-oxoprostaglandin E1 + NADH + H(+). It carries out the reaction 14-hydroxy-(4Z,7Z,10Z,12E,16Z,19Z)-docosahexaenoate + NAD(+) = 14-oxo-(4Z,7Z,10Z,12E,16Z,19Z)-docosahexaenoate + NADH + H(+). The enzyme catalyses resolvin E1 + NAD(+) = 18-oxo-resolvin E1 + NADH + H(+). It catalyses the reaction resolvin D1 + NAD(+) = 8-oxoresolvin D1 + NADH + H(+). The catalysed reaction is resolvin D1 + NAD(+) = 17-oxoresolvin D1 + NADH + H(+). It carries out the reaction resolvin D2 + NAD(+) = 7-oxoresolvin D2 + NADH + H(+). The enzyme catalyses resolvin D2 + NAD(+) = 16-oxoresolvin D2 + NADH + H(+). Its function is as follows. Catalyzes the NAD-dependent dehydrogenation (oxidation) of a broad array of hydroxylated polyunsaturated fatty acids (mainly eicosanoids and docosanoids, including prostaglandins, lipoxins and resolvins), yielding their corresponding keto (oxo) metabolites. Decreases the levels of the pro-proliferative prostaglandins such as prostaglandin E2 (whose activity is increased in cancer because of an increase in the expression of cyclooxygenase 2) and generates oxo-fatty acid products that can profoundly influence cell function by abrogating pro-inflammatory cytokine expression. Converts resolvins E1, D1 and D2 to their oxo products, which represents a mode of resolvin inactivation. Resolvin E1 plays important roles during the resolution phase of acute inflammation, while resolvins D1 and D2 have a unique role in obesity-induced adipose inflammation. The sequence is that of 15-hydroxyprostaglandin dehydrogenase [NAD(+)] (HPGD) from Macaca fascicularis (Crab-eating macaque).